Here is a 189-residue protein sequence, read N- to C-terminus: Small ribosomal subunit protein uS5 (189 aa).

The S5 DRBM domain occupies 27–90 (FEERLLEAAR…EDAKKKTIRV (64 aa)).

The protein belongs to the universal ribosomal protein uS5 family. Part of the 30S ribosomal subunit. Contacts proteins S4 and S8.

In terms of biological role, with S4 and S12 plays an important role in translational accuracy. Its function is as follows. Located at the back of the 30S subunit body where it stabilizes the conformation of the head with respect to the body. This chain is Small ribosomal subunit protein uS5, found in Hydrogenobaculum sp. (strain Y04AAS1).